A 311-amino-acid polypeptide reads, in one-letter code: Acetaldehyde dehydrogenase 1 (311 aa).

NAD(+) is bound at residue 11-14 (SGNI). The active-site Acyl-thioester intermediate is Cys-129. NAD(+)-binding positions include 161–169 (SAGPGTRAN) and Asn-288.

Belongs to the acetaldehyde dehydrogenase family.

The enzyme catalyses acetaldehyde + NAD(+) + CoA = acetyl-CoA + NADH + H(+). This Novosphingobium aromaticivorans (strain ATCC 700278 / DSM 12444 / CCUG 56034 / CIP 105152 / NBRC 16084 / F199) protein is Acetaldehyde dehydrogenase 1.